The primary structure comprises 259 residues: Probable iron export permease protein FetB (259 aa).

Residues 1-5 (MNSHN) lie on the Periplasmic side of the membrane. Residues 6-26 (ITNESLALALMLVVVAILISH) traverse the membrane as a helical segment. The Cytoplasmic portion of the chain corresponds to 27–35 (KEKLALEKD). 2 helical membrane passes run 36-56 (ILWS…VLKY) and 57-77 (IFSV…CFNA). Residues 78–91 (AWNAQKRSKYIAKA) lie on the Cytoplasmic side of the membrane. The helical transmembrane segment at 92-112 (FISSFIAITVGAGITLAVLIL) threads the bilayer. Topologically, residues 113 to 117 (SGSIE) are periplasmic. Residues 118–138 (FIPMQVIPIAGMIAGNAMVAV) form a helical membrane-spanning segment. Topologically, residues 139–191 (GLCYNNLGQRVISEQQQIQEKLSLGATPKQASAILIRDSIRAALIPTVDSAKT) are cytoplasmic. Residues 192 to 212 (VGLVSLPGMMSGLIFAGIDPV) traverse the membrane as a helical segment. The Periplasmic segment spans residues 213 to 218 (KAIKYQ). A helical transmembrane segment spans residues 219 to 239 (IMVTFMLLSTASLSTIIACYL). At 240–259 (TYRKFYNSRHQLVVTQLKKK) the chain is on the cytoplasmic side.

This sequence belongs to the UPF0014 family. As to quaternary structure, the complex is composed of two ATP-binding proteins (FetA) and two transmembrane proteins (FetB).

The protein localises to the cell inner membrane. Part of the ABC transporter complex FetAB, which is probably involved in iron export and enhances resistance to H(2)O(2)-mediated oxidative stress. Probably responsible for the translocation of the substrate across the membrane. This chain is Probable iron export permease protein FetB (fetB), found in Escherichia coli (strain K12).